A 167-amino-acid chain; its full sequence is V-type proton ATPase subunit c' (167 aa).

The Lumenal segment spans residues 1-13 (MAEIMADSELAPK). Residues 14-34 (FAPFIGMAGIAAAMIFGSAGA) form a helical membrane-spanning segment. The Cytoplasmic segment spans residues 35 to 59 (AYGTAKSGIGIAGVGTFRPDLIMKC). The helical transmembrane segment at 60 to 80 (LIPVVMSGIIAVYALVVAVLI) threads the bilayer. At 81-101 (AQDLGPPGSGQHYSLFNGFMH) the chain is on the lumenal side. A helical membrane pass occupies residues 102 to 122 (LACGLSVGLTGLAAGYCIGIV). At 123–140 (GDKGVRSFMLQSRIFVGM) the chain is on the cytoplasmic side. The helical transmembrane segment at 141 to 161 (VLILIFGEVLGLYGLIVALIL) threads the bilayer. The Lumenal segment spans residues 162–167 (NTKSKG).

It belongs to the V-ATPase proteolipid subunit family. In terms of assembly, V-ATPase is a heteromultimeric enzyme composed of a peripheral catalytic V1 complex (components A to H) attached to an integral membrane V0 proton pore complex (components: a, c, c', c'', d, e, f and VOA1). The decameric c-ring forms the proton-conducting pore, and is composed of eight proteolipid subunits c, one subunit c' and one subunit c''.

The protein localises to the vacuole membrane. Functionally, proton-conducting pore forming subunit of the V0 complex of vacuolar(H+)-ATPase (V-ATPase), a multisubunit enzyme composed of a peripheral complex (V1) that hydrolyzes ATP and a membrane integral complex (V0) that translocates protons. V-ATPase is responsible for acidifying and maintaining the pH of intracellular compartments. This is V-type proton ATPase subunit c' (vma-11) from Neurospora crassa (strain ATCC 24698 / 74-OR23-1A / CBS 708.71 / DSM 1257 / FGSC 987).